An 83-amino-acid polypeptide reads, in one-letter code: MVVIRLARGGSKKRPFFNIVATDSRSRRDGRFIERVGFYNPLAAEGEEGLRLAQDRLAYWQGVGAQLSPTVARLVKQGAKAAA.

The protein belongs to the bacterial ribosomal protein bS16 family.

The sequence is that of Small ribosomal subunit protein bS16 from Cupriavidus taiwanensis (strain DSM 17343 / BCRC 17206 / CCUG 44338 / CIP 107171 / LMG 19424 / R1) (Ralstonia taiwanensis (strain LMG 19424)).